A 379-amino-acid chain; its full sequence is Alcohol dehydrogenase 1 (379 aa).

Zn(2+)-binding residues include C47, T49, H69, C99, C102, C105, C113, and C177. Residues T49 and H69 each contribute to the an alcohol site. Position 49 (T49) interacts with NAD(+). Residues 202 to 207 (GLGAVG), D226, R231, T272, V295, 295 to 297 (VGV), F322, and R372 each bind NAD(+).

Belongs to the zinc-containing alcohol dehydrogenase family. In terms of assembly, homodimer. Zn(2+) serves as cofactor.

The protein resides in the cytoplasm. The enzyme catalyses a primary alcohol + NAD(+) = an aldehyde + NADH + H(+). It carries out the reaction a secondary alcohol + NAD(+) = a ketone + NADH + H(+). This Zea mays (Maize) protein is Alcohol dehydrogenase 1 (ADH1).